The chain runs to 125 residues: Large ribosomal subunit protein uL22c (125 aa).

This sequence belongs to the universal ribosomal protein uL22 family. As to quaternary structure, part of the 50S ribosomal subunit.

The protein localises to the plastid. The protein resides in the chloroplast. This protein binds specifically to 23S rRNA. Its function is as follows. The globular domain of the protein is located near the polypeptide exit tunnel on the outside of the subunit, while an extended beta-hairpin is found that lines the wall of the exit tunnel in the center of the 70S ribosome. This is Large ribosomal subunit protein uL22c (rpl22) from Nuphar advena (Common spatterdock).